Consider the following 247-residue polypeptide: Sugar fermentation stimulation protein homolog (247 aa).

This sequence belongs to the SfsA family.

This chain is Sugar fermentation stimulation protein homolog, found in Aeromonas salmonicida (strain A449).